Reading from the N-terminus, the 452-residue chain is Tylactone mycaminosyltransferase (452 aa).

Over residues 1-16 the composition is skewed to basic and acidic residues; the sequence is MRRALDDRRRGPHGPE. The disordered stretch occupies residues 1–20; sequence MRRALDDRRRGPHGPEGKPP.

Belongs to the glycosyltransferase 28 family.

It catalyses the reaction tylactone + dTDP-alpha-D-mycaminose = 5-O-beta-D-mycaminosyltylactone + dTDP + H(+). It functions in the pathway antibiotic biosynthesis; tylosin biosynthesis. The activity of TylM2 is substantially increased by the addition of the accessory protein TylM3. In terms of biological role, involved in the biosynthesis of the macrolide antibiotic tylosin derived from the polyketide lactone tylactone. Catalyzes the transfer of alpha-D-mycaminosyl from dTDP-alpha-D-mycaminose to the 5-hydroxyl group of tylactone to yield 5-O-mycaminosytylactone. It can also accept 16-membered tylactone and 12-membered ring macrolide. In Streptomyces fradiae (Streptomyces roseoflavus), this protein is Tylactone mycaminosyltransferase.